The primary structure comprises 229 residues: Homeobox-leucine zipper protein HOX3 (229 aa).

Residues 1-82 (MMGATSPSGL…GPHRPKKLRL (82 aa)) form a disordered region. Acidic residues predominate over residues 52–68 (GEEEEFPMGSVEEDEEE). The segment at residues 75–134 (HRPKKLRLSKEQSRLLEESFRLNHTLTPKQKEALAIKLKLRPRQVEVWFQNRRARTKLKQ) is a DNA-binding region (homeobox). The interval 133 to 177 (KQTEMECEYLKRCFGSLTEENRRLQREVEELRAMRVAPPTVLSPH) is leucine-zipper. Residues 198–229 (AATGPPAVRPPPSSAAAAAPSPFHPRRPSAAF) are disordered.

Belongs to the HD-ZIP homeobox family. Class II subfamily. As to quaternary structure, homodimer. May form a heterodimer with HOX1, HOX2 or HOX7. In terms of tissue distribution, expressed in seedlings, roots, leaves, nodes, internodes, flowers and embryo.

The protein localises to the nucleus. Probable transcription repressor that binds to the DNA sequence 5'-CAAT[GC]ATTG-3'. The sequence is that of Homeobox-leucine zipper protein HOX3 (HOX3) from Oryza sativa subsp. indica (Rice).